A 360-amino-acid chain; its full sequence is Phospho-N-acetylmuramoyl-pentapeptide-transferase (360 aa).

10 consecutive transmembrane segments (helical) span residues 21–41 (YLSF…LWMG), 73–93 (TMGG…WADL), 94–114 (SNPY…VGFV), 132–152 (WKYF…YAHG), 168–188 (VMPQ…VGTS), 199–219 (GLAI…AWAT), 239–259 (LVVV…FNTY), 263–283 (VFMG…IAVL), 288–308 (LVLV…ILQV), and 338–358 (VIVR…ATLK).

This sequence belongs to the glycosyltransferase 4 family. MraY subfamily. Mg(2+) serves as cofactor.

Its subcellular location is the cell inner membrane. It carries out the reaction UDP-N-acetyl-alpha-D-muramoyl-L-alanyl-gamma-D-glutamyl-meso-2,6-diaminopimeloyl-D-alanyl-D-alanine + di-trans,octa-cis-undecaprenyl phosphate = di-trans,octa-cis-undecaprenyl diphospho-N-acetyl-alpha-D-muramoyl-L-alanyl-D-glutamyl-meso-2,6-diaminopimeloyl-D-alanyl-D-alanine + UMP. It functions in the pathway cell wall biogenesis; peptidoglycan biosynthesis. Catalyzes the initial step of the lipid cycle reactions in the biosynthesis of the cell wall peptidoglycan: transfers peptidoglycan precursor phospho-MurNAc-pentapeptide from UDP-MurNAc-pentapeptide onto the lipid carrier undecaprenyl phosphate, yielding undecaprenyl-pyrophosphoryl-MurNAc-pentapeptide, known as lipid I. This chain is Phospho-N-acetylmuramoyl-pentapeptide-transferase, found in Vibrio atlanticus (strain LGP32) (Vibrio splendidus (strain Mel32)).